The following is a 143-amino-acid chain: Transcriptional regulator MraZ (143 aa).

SpoVT-AbrB domains lie at 5 to 47 and 76 to 119; these read EFRH…PMNE and ASEC…SQEK.

This sequence belongs to the MraZ family. Forms oligomers.

The protein resides in the cytoplasm. It localises to the nucleoid. This Natranaerobius thermophilus (strain ATCC BAA-1301 / DSM 18059 / JW/NM-WN-LF) protein is Transcriptional regulator MraZ.